A 128-amino-acid polypeptide reads, in one-letter code: Glycine cleavage system H protein (128 aa).

The Lipoyl-binding domain maps to 23–105 (VATVGISDHA…YEGGWLFKVQ (83 aa)). Lysine 64 is subject to N6-lipoyllysine.

Belongs to the GcvH family. As to quaternary structure, the glycine cleavage system is composed of four proteins: P, T, L and H. It depends on (R)-lipoate as a cofactor.

Functionally, the glycine cleavage system catalyzes the degradation of glycine. The H protein shuttles the methylamine group of glycine from the P protein to the T protein. This chain is Glycine cleavage system H protein, found in Alcanivorax borkumensis (strain ATCC 700651 / DSM 11573 / NCIMB 13689 / SK2).